A 147-amino-acid polypeptide reads, in one-letter code: D-aminoacyl-tRNA deacylase (147 aa).

Positions 137-138 match the Gly-cisPro motif, important for rejection of L-amino acids motif; that stretch reads GP.

The protein belongs to the DTD family. In terms of assembly, homodimer.

The protein localises to the cytoplasm. The enzyme catalyses glycyl-tRNA(Ala) + H2O = tRNA(Ala) + glycine + H(+). It carries out the reaction a D-aminoacyl-tRNA + H2O = a tRNA + a D-alpha-amino acid + H(+). Functionally, an aminoacyl-tRNA editing enzyme that deacylates mischarged D-aminoacyl-tRNAs. Also deacylates mischarged glycyl-tRNA(Ala), protecting cells against glycine mischarging by AlaRS. Acts via tRNA-based rather than protein-based catalysis; rejects L-amino acids rather than detecting D-amino acids in the active site. By recycling D-aminoacyl-tRNA to D-amino acids and free tRNA molecules, this enzyme counteracts the toxicity associated with the formation of D-aminoacyl-tRNA entities in vivo and helps enforce protein L-homochirality. The chain is D-aminoacyl-tRNA deacylase from Bacillus velezensis (strain DSM 23117 / BGSC 10A6 / LMG 26770 / FZB42) (Bacillus amyloliquefaciens subsp. plantarum).